We begin with the raw amino-acid sequence, 218 residues long: Superoxide dismutase [Mn] 1 (218 aa).

Mn(2+)-binding residues include His-43, His-98, Asp-180, and His-184.

Belongs to the iron/manganese superoxide dismutase family. As to quaternary structure, homodimer. It depends on Mn(2+) as a cofactor.

The catalysed reaction is 2 superoxide + 2 H(+) = H2O2 + O2. Its function is as follows. Destroys superoxide anion radicals which are normally produced within the cells and which are toxic to biological systems. The protein is Superoxide dismutase [Mn] 1 (sodA1) of Bacillus cereus (strain ATCC 14579 / DSM 31 / CCUG 7414 / JCM 2152 / NBRC 15305 / NCIMB 9373 / NCTC 2599 / NRRL B-3711).